The chain runs to 47 residues: Delta-stichotoxin-Hcr3a (47 aa).

Proline 3 is subject to Hydroxyproline. 3 cysteine pairs are disulfide-bonded: cysteine 4–cysteine 44, cysteine 6–cysteine 34, and cysteine 27–cysteine 45.

This sequence belongs to the sea anemone sodium channel inhibitory toxin family. Type I subfamily.

Its subcellular location is the secreted. The protein resides in the nematocyst. Its function is as follows. Inhibits voltage-gated sodium channels (Nav). The protein is Delta-stichotoxin-Hcr3a of Radianthus crispa (Leathery sea anemone).